The sequence spans 153 residues: Ribosome maturation factor RimP (153 aa).

The protein belongs to the RimP family.

It localises to the cytoplasm. In terms of biological role, required for maturation of 30S ribosomal subunits. The chain is Ribosome maturation factor RimP from Clostridium botulinum (strain Loch Maree / Type A3).